A 573-amino-acid polypeptide reads, in one-letter code: Potassium-transporting ATPase potassium-binding subunit (573 aa).

Transmembrane regions (helical) follow at residues 3-23 (AEGL…TPLL), 65-85 (GYTL…YALL), 136-156 (GLTV…VALI), 179-199 (LYVL…QGVP), 254-274 (LTNL…IYSF), 286-306 (ALWT…WWAE), 383-403 (AGLY…GLMV), 423-443 (VIAV…TTVV), 489-509 (GLGL…LAIA), and 531-551 (LFIT…FFPA).

It belongs to the KdpA family. In terms of assembly, the system is composed of three essential subunits: KdpA, KdpB and KdpC.

The protein localises to the cell inner membrane. Part of the high-affinity ATP-driven potassium transport (or Kdp) system, which catalyzes the hydrolysis of ATP coupled with the electrogenic transport of potassium into the cytoplasm. This subunit binds the periplasmic potassium ions and delivers the ions to the membrane domain of KdpB through an intramembrane tunnel. The sequence is that of Potassium-transporting ATPase potassium-binding subunit from Rhodospirillum centenum (strain ATCC 51521 / SW).